Consider the following 462-residue polypeptide: FAD-dependent monooxygenase opaC (462 aa).

A glycan (N-linked (GlcNAc...) asparagine) is linked at asparagine 10. Residues 14 to 34 form a helical membrane-spanning segment; it reads ITVIIIGLGIGGLTAAISCHL. Residue aspartate 43 coordinates FAD. A glycan (N-linked (GlcNAc...) asparagine) is linked at asparagine 60. Arginine 115 lines the FAD pocket. Residue arginine 193 is part of the active site. Aspartate 322 and alanine 335 together coordinate FAD.

The protein belongs to the paxM FAD-dependent monooxygenase family. The cofactor is FAD.

It is found in the membrane. It participates in secondary metabolite biosynthesis. Functionally, FAD-dependent monooxygenase; part of the gene cluster that mediates the biosynthesis of oxepinamides, derivatives of anthranilyl-containing tripeptides that share an oxepin ring and a fused pyrimidinone moiety. The nonribosomal peptide synthetase (NRPS) opaA assembles the quinazolinone core with D-Phe incorporation. The first adenylation domain (A1) of opaA loads and activates anthranilic acid whereas the second A domain (A2) is for activating of L-Phe, which is then converted to D-form by the E domain. The third A domain (A3) is responsible for L-Ile activation and the terminal condensation domain C3 for cyclization and releasing the NRPS product protuboxepin K. The cytochrome P450 monooxygenase opaB then catalyzes alone the oxepin ring formation to convert protuboxepin K into protuboxepin A. The flavoenzyme opaC installs subsequently one hydroxyl group at the oxepin ring, accompanied by double bond migration, to form 15-epi-oxepinamide E. The epimerase opaE changes the D-Phe residue back to L-form, leading to oxepinamide E, which is further methylated at the hydroxyl group at C-12 by the O-methyltransferase OpaF to yield oxepinamide F. The sequence is that of FAD-dependent monooxygenase opaC from Aspergillus ustus.